Consider the following 1215-residue polypeptide: RNA-dependent RNA polymerase 1 (1215 aa).

It belongs to the RdRP family. In terms of assembly, cid12, hrr1 and rdp1 interact forming the RNA-directed RNA polymerase complex (RDRC). The RDRC complex interacts with the RITS complex via interaction between ago1 and hrr1. Clr4 has a role in mediating this interaction.

It localises to the cytoplasm. The protein resides in the nucleus. Its subcellular location is the chromosome. It is found in the telomere. The protein localises to the centromere. It catalyses the reaction RNA(n) + a ribonucleoside 5'-triphosphate = RNA(n+1) + diphosphate. Functionally, has a role in the RNA interference (RNAi) pathway which is important for heterochromatin formation, accurate chromosome segregation, centromere cohesion and telomere function during mitosis and meiosis. Required for both post-transcriptional and transcriptional gene silencing. Required for silencing at the centromeres and for initiation of transcriptionally silent heterochromatin at the mating type locus. Promotes histone H3 'Lys-10' methylation necessary for centromere function. Required for recruitment of swi6 and cohesin to an ectopic dg repeat. A member of the RNA-directed RNA polymerase complex (RDRC) which is involved in the generation of small interfering RNAs (siRNAs) and mediates their association with the RNA-induced transcriptional silencing (RITS) complex. RITS acts as a priming complex for dsRNA synthesis at the site of non-coding centromeric RNA. Its RNA-dependent RNA polymerase activity is critical in siRNA production necessary for heterochromatin formation. This chain is RNA-dependent RNA polymerase 1 (rdp1), found in Schizosaccharomyces pombe (strain 972 / ATCC 24843) (Fission yeast).